Consider the following 1863-residue polypeptide: 5'-3' DNA helicase ZGRF1 (1863 aa).

Disordered stretches follow at residues 78–110 (SRAV…QPSG), 132–196 (ENSE…PLSL), and 300–349 (TQSI…PEAQ). The segment covering 81–90 (VEPDGSREAL) has biased composition (basic and acidic residues). Low complexity predominate over residues 92-105 (SGSRTLVSSSRSLG). Polar residues-rich tracts occupy residues 173 to 185 (PVST…ITFS) and 300 to 321 (TQSI…TTSR). Ser331 and Ser445 each carry phosphoserine. 3 disordered regions span residues 460–496 (PVSP…SKSN), 524–545 (TSDT…ERWE), and 610–664 (GDVK…GVSP). Basic and acidic residues predominate over residues 533-545 (EDSRLSQDSERWE). The Zn(2+) site is built by Cys1111, His1113, Cys1136, and Cys1144. The segment at 1111-1153 (CHHNQPAKLVMVKKEGPNKGRLFYTCDKSKDNQCKFFKWLEEV) adopts a GRF-type zinc-finger fold.

Interacts with DNA repair protein RAD51; the interaction promotes RAD51 strand exchange activity. Also interacts with DNA repair proteins EXO1 and BRCA1; the interactions are increased following DNA damage induction.

It is found in the nucleus. It catalyses the reaction ATP + H2O = ADP + phosphate + H(+). The enzyme catalyses Couples ATP hydrolysis with the unwinding of duplex DNA at the replication fork by translocating in the 5'-3' direction. This creates two antiparallel DNA single strands (ssDNA). The leading ssDNA polymer is the template for DNA polymerase III holoenzyme which synthesizes a continuous strand.. In terms of biological role, 5'-3' DNA helicase which is recruited to sites of DNA damage and promotes repair of replication-blocking DNA lesions through stimulation of homologous recombination (HR). Promotes HR by directly stimulating RAD51-mediated strand exchange activity. Not required to load RAD51 at sites of DNA damage but promotes recombinational repair after RAD51 recruitment. Also promotes HR by positively regulating EXO1-mediated DNA end resection of DNA double-strand breaks. Required for recruitment of replication protein RPA2 to DNA damage sites. Promotes the initiation of the G2/M checkpoint but not its maintenance. Catalyzes Holliday junction branch migration and dissociation of D-loops and DNA flaps. The polypeptide is 5'-3' DNA helicase ZGRF1 (Zgrf1) (Mus musculus (Mouse)).